The sequence spans 143 residues: Alpha-amylase/trypsin inhibitor CM16 (143 aa).

A signal peptide spans 1–24; sequence MASKSNCVLLLAAVLVSIFAAVAA.

It belongs to the protease inhibitor I6 (cereal trypsin/alpha-amylase inhibitor) family. Subunit of the tetrameric inhibitor. Five disulfide bonds, which are essential for the inhibitor activity, are probably present. As to expression, developing endosperm.

The protein resides in the secreted. Functionally, alpha-amylase/trypsin inhibitor. It could be involved in insect defense mechanisms. The chain is Alpha-amylase/trypsin inhibitor CM16 from Triticum aestivum (Wheat).